The primary structure comprises 436 residues: UPF0597 protein YhaM (436 aa).

It belongs to the UPF0597 family.

In terms of biological role, thought to be a D-serine dehydratase, however it does not complement a dsdA (D-serine dehydratase) mutant in strain CFT073, suggesting it may not have that function. The chain is UPF0597 protein YhaM from Escherichia coli O157:H7.